The chain runs to 459 residues: tRNA modification GTPase MnmE (459 aa).

3 residues coordinate (6S)-5-formyl-5,6,7,8-tetrahydrofolate: R22, E85, and R124. A TrmE-type G domain is found at 221-380 (GLSTVIVGRP…LEIQIKDLFF (160 aa)). Residue N231 coordinates K(+). Residues 231 to 236 (NVGKSS), 250 to 256 (TEVAGTT), and 275 to 278 (DTAG) contribute to the GTP site. Residue S235 coordinates Mg(2+). K(+)-binding residues include T250, V252, and T255. T256 contacts Mg(2+). K459 contacts (6S)-5-formyl-5,6,7,8-tetrahydrofolate.

This sequence belongs to the TRAFAC class TrmE-Era-EngA-EngB-Septin-like GTPase superfamily. TrmE GTPase family. As to quaternary structure, homodimer. Heterotetramer of two MnmE and two MnmG subunits. Requires K(+) as cofactor.

It localises to the cytoplasm. Exhibits a very high intrinsic GTPase hydrolysis rate. Involved in the addition of a carboxymethylaminomethyl (cmnm) group at the wobble position (U34) of certain tRNAs, forming tRNA-cmnm(5)s(2)U34. This chain is tRNA modification GTPase MnmE, found in Staphylococcus epidermidis (strain ATCC 35984 / DSM 28319 / BCRC 17069 / CCUG 31568 / BM 3577 / RP62A).